We begin with the raw amino-acid sequence, 78 residues long: Large ribosomal subunit protein bL28 (78 aa).

Residues 1–20 (MSQVCQVTGKRPVVGNNRSH) form a disordered region.

The protein belongs to the bacterial ribosomal protein bL28 family.

This is Large ribosomal subunit protein bL28 from Idiomarina loihiensis (strain ATCC BAA-735 / DSM 15497 / L2-TR).